The sequence spans 181 residues: Transcription termination/antitermination protein NusG (181 aa).

In terms of domain architecture, KOW spans 130-158; that stretch reads PGETVRVNDGPFSDFNGIVEEVDYEKNRL.

This sequence belongs to the NusG family. As to quaternary structure, monomer. Interacts with the transcription termination factor Rho and with RNA polymerase.

Functionally, participates in transcription elongation, termination and antitermination. In the absence of Rho, increases the rate of transcription elongation by the RNA polymerase (RNAP), probably by partially suppressing pausing. In the presence of Rho, modulates most Rho-dependent termination events by interacting with the RNAP to render the complex more susceptible to the termination activity of Rho. May be required to overcome a kinetic limitation of Rho to function at certain terminators. Also involved in ribosomal RNA transcriptional antitermination. This chain is Transcription termination/antitermination protein NusG, found in Buchnera aphidicola subsp. Baizongia pistaciae (strain Bp).